The chain runs to 555 residues: Glutamine--tRNA ligase (555 aa).

Residues 34 to 44 (PEPNGYLHIGH) carry the 'HIGH' region motif. ATP-binding positions include 35–37 (EPN) and 41–47 (HIGHAKS). D67 and Y212 together coordinate L-glutamine. ATP is bound by residues T231, 261–262 (RL), and 269–271 (MSK). A 'KMSKS' region motif is present at residues 268-272 (IMSKR).

The protein belongs to the class-I aminoacyl-tRNA synthetase family. Monomer.

It is found in the cytoplasm. The enzyme catalyses tRNA(Gln) + L-glutamine + ATP = L-glutaminyl-tRNA(Gln) + AMP + diphosphate. The sequence is that of Glutamine--tRNA ligase from Yersinia pseudotuberculosis serotype O:3 (strain YPIII).